A 406-amino-acid polypeptide reads, in one-letter code: Argininosuccinate synthase (406 aa).

ATP-binding positions include 12-20 and Ala40; that span reads AYSGGLDTS. L-citrulline is bound by residues Tyr92 and Ser97. ATP is bound at residue Gly122. L-aspartate contacts are provided by Thr124, Asn128, and Asp129. Position 128 (Asn128) interacts with L-citrulline. Positions 132, 181, 190, 266, and 278 each coordinate L-citrulline.

It belongs to the argininosuccinate synthase family. Type 1 subfamily. Homotetramer.

Its subcellular location is the cytoplasm. The catalysed reaction is L-citrulline + L-aspartate + ATP = 2-(N(omega)-L-arginino)succinate + AMP + diphosphate + H(+). It functions in the pathway amino-acid biosynthesis; L-arginine biosynthesis; L-arginine from L-ornithine and carbamoyl phosphate: step 2/3. The chain is Argininosuccinate synthase from Serratia proteamaculans (strain 568).